The sequence spans 628 residues: (+)-alpha pinene synthase 1, chloroplastic (628 aa).

The Mg(2+) site is built by aspartate 379, aspartate 383, and aspartate 531. Positions 379 to 383 (DDIYD) match the DDXXD motif motif.

It belongs to the terpene synthase family. Tpsd subfamily. Mg(2+) is required as a cofactor. The cofactor is Mn(2+).

It localises to the plastid. The protein localises to the chloroplast. It carries out the reaction (2E)-geranyl diphosphate = (1R,5R)-alpha-pinene + diphosphate. The protein operates within terpene metabolism; oleoresin biosynthesis. It functions in the pathway secondary metabolite biosynthesis; terpenoid biosynthesis. Its function is as follows. Monoterpene synthase (TPS) involved in the biosynthesis of monoterpene natural products included in conifer oleoresin secretions and volatile emissions; these compounds contribute to biotic and abiotic stress defense against herbivores and pathogens. Catalyzes the conversion of (2E)-geranyl diphosphate (GPP) to (+)-alpha-pinene. This is (+)-alpha pinene synthase 1, chloroplastic from Pinus contorta (Shore pine).